Reading from the N-terminus, the 45-residue chain is Large ribosomal subunit protein bL34 (45 aa).

This sequence belongs to the bacterial ribosomal protein bL34 family.

This is Large ribosomal subunit protein bL34 (rpmH) from Streptomyces bikiniensis.